Reading from the N-terminus, the 217-residue chain is uncharacterized protein (217 aa).

A compositionally biased stretch (polar residues) spans alanine 59 to asparagine 76. 2 disordered regions span residues alanine 59–asparagine 105 and lysine 124–lysine 217. At serine 68 the chain carries Phosphoserine. Position 92 is a phosphothreonine (threonine 92). The segment covering lysine 124–glutamine 135 has biased composition (basic and acidic residues). Residues glutamate 136–valine 147 are compositionally biased toward acidic residues. Over residues glutamate 148–asparagine 157 the composition is skewed to polar residues. Positions leucine 173–aspartate 188 are enriched in acidic residues. Polar residues predominate over residues tryptophan 199–lysine 217.

This is an uncharacterized protein from Schizosaccharomyces pombe (strain 972 / ATCC 24843) (Fission yeast).